The following is a 231-amino-acid chain: NADH-ubiquinone oxidoreductase chain 4 (231 aa).

7 consecutive transmembrane segments (helical) span residues 1 to 21 (PIAG…YGMI), 34 to 54 (MFIP…LTCL), 62 to 82 (LIAY…SIQT), 86 to 106 (LSGA…LFCL), 118 to 138 (ILIL…WWLL), 169 to 189 (TIIL…HIFL), and 211 to 231 (LLMT…ELVM).

It belongs to the complex I subunit 4 family.

The protein resides in the mitochondrion membrane. It catalyses the reaction a ubiquinone + NADH + 5 H(+)(in) = a ubiquinol + NAD(+) + 4 H(+)(out). In terms of biological role, core subunit of the mitochondrial membrane respiratory chain NADH dehydrogenase (Complex I) that is believed to belong to the minimal assembly required for catalysis. Complex I functions in the transfer of electrons from NADH to the respiratory chain. The immediate electron acceptor for the enzyme is believed to be ubiquinone. This Causus rhombeatus (Rhombic night adder) protein is NADH-ubiquinone oxidoreductase chain 4 (MT-ND4).